A 368-amino-acid chain; its full sequence is Endoglucanase (368 aa).

A signal peptide spans 1–21; the sequence is MNVLRSGLVTMLLLAAFSVQA. Glu55 serves as the catalytic Proton donor. Residue Asp116 is the Nucleophile of the active site.

It belongs to the glycosyl hydrolase 8 (cellulase D) family.

It is found in the secreted. It carries out the reaction Endohydrolysis of (1-&gt;4)-beta-D-glucosidic linkages in cellulose, lichenin and cereal beta-D-glucans.. Its pathway is glycan metabolism; bacterial cellulose biosynthesis. Hydrolyzes carboxymethylcellulose. This chain is Endoglucanase (bcsZ), found in Escherichia coli O157:H7.